We begin with the raw amino-acid sequence, 337 residues long: P2Y purinoceptor 14 (337 aa).

At methionine 1 to tyrosine 28 the chain is on the extracellular side. The N-linked (GlcNAc...) asparagine glycan is linked to asparagine 2. The chain crosses the membrane as a helical span at residues phenylalanine 29–valine 49. Residues proline 50–serine 54 are Cytoplasmic-facing. Residues phenylalanine 55–phenylalanine 75 traverse the membrane as a helical segment. Residues lysine 76 to valine 95 are Extracellular-facing. A disulfide bond links cysteine 93 and cysteine 171. The helical transmembrane segment at serine 96–phenylalanine 116 threads the bilayer. At aspartate 117–lysine 138 the chain is on the cytoplasmic side. Residues leucine 139–threonine 159 traverse the membrane as a helical segment. The Extracellular portion of the chain corresponds to asparagine 160 to serine 187. An N-linked (GlcNAc...) asparagine glycan is attached at asparagine 162. The helical transmembrane segment at tyrosine 188–isoleucine 208 threads the bilayer. At threonine 209–asparagine 233 the chain is on the cytoplasmic side. The helical transmembrane segment at isoleucine 234 to proline 254 threads the bilayer. Over tyrosine 255–glutamate 277 the chain is Extracellular. The chain crosses the membrane as a helical span at residues phenylalanine 278–cysteine 298. The Cytoplasmic portion of the chain corresponds to glutamine 299–leucine 337.

Belongs to the G-protein coupled receptor 1 family.

It is found in the cell membrane. Functionally, receptor for UDP-glucose and other UDP-sugar coupled to G-proteins. Not activated by ATP, ADP, UTP or ATP. This chain is P2Y purinoceptor 14 (P2RY14), found in Bos taurus (Bovine).